We begin with the raw amino-acid sequence, 816 residues long: Phosphatidylinositol 4-kinase beta (816 aa).

Residues 1–30 (MGDTVVEPTPLKPTSESTPGPAGSNGGSLL) are disordered. Gly-2 bears the N-acetylglycine mark. Positions 2–68 (GDTVVEPTPL…VKLLHGGVAI (67 aa)) are interaction with ACBD3. The region spanning 52–242 (CQEVLEKVKL…GTKLRKLILS (191 aa)) is the PIK helical domain. Positions 248 to 318 (AHRKRELPSL…TESIDNSFSS (71 aa)) are disordered. A Phosphoserine modification is found at Ser-258. Position 263 is a phosphothreonine (Thr-263). A phosphoserine mark is found at Ser-266, Ser-275, Ser-277, Ser-284, and Ser-294. 2 stretches are compositionally biased toward polar residues: residues 278-297 (DATA…SNPK) and 306-318 (SSST…SFSS). At Ser-428 the chain carries Phosphoserine. Position 438 is a phosphothreonine (Thr-438). Ser-511 carries the post-translational modification Phosphoserine. Phosphothreonine occurs at positions 517 and 519. The 267-residue stretch at 535–801 (EPWQEKVRRI…MVDGSMRSIT (267 aa)) folds into the PI3K/PI4K catalytic domain. A G-loop region spans residues 541–547 (VRRIREG). The catalytic loop stretch occupies residues 668–676 (QVKDRHNGN). An activation loop region spans residues 687-711 (HIDFGFILSSSPRNLGFETSAFKLT).

This sequence belongs to the PI3/PI4-kinase family. Type III PI4K subfamily. As to quaternary structure, interacts with ARF1 and ARF3 in the Golgi complex, but not with ARF4, ARF5 or ARF6. Interacts with NCS1/FREQ in a calcium-independent manner. Interacts with CALN1/CABP8 and CALN2/CABP7; in a calcium-dependent manner; this interaction competes with NCS1/FREQ binding. Interacts with ACBD3. Interacts with ARMH3, YWHAB, YWHAE, YWHAG, YWHAH, YWHAQ, YWHAZ and SFN. Interacts with GGA2 (via VHS domain); the interaction is important for PI4KB location at the Golgi apparatus membrane. Interacts with ATG9A. Mg(2+) serves as cofactor. Requires Mn(2+) as cofactor.

The protein localises to the endomembrane system. Its subcellular location is the mitochondrion outer membrane. It localises to the rough endoplasmic reticulum membrane. The protein resides in the golgi apparatus. It is found in the golgi apparatus membrane. The catalysed reaction is a 1,2-diacyl-sn-glycero-3-phospho-(1D-myo-inositol) + ATP = a 1,2-diacyl-sn-glycero-3-phospho-(1D-myo-inositol 4-phosphate) + ADP + H(+). Its activity is regulated as follows. Inhibited by wortmannin. Increased kinase activity upon interaction with NCS1/FREQ. Phosphorylates phosphatidylinositol (PI) in the first committed step in the production of the second messenger inositol-1,4,5,-trisphosphate (PIP). May regulate Golgi disintegration/reorganization during mitosis, possibly via its phosphorylation. Involved in Golgi-to-plasma membrane trafficking. May play an important role in the inner ear development. This Otolemur garnettii (Small-eared galago) protein is Phosphatidylinositol 4-kinase beta (PI4KB).